The primary structure comprises 690 residues: Glycine--tRNA ligase beta subunit (690 aa).

The protein belongs to the class-II aminoacyl-tRNA synthetase family. Tetramer of two alpha and two beta subunits.

The protein resides in the cytoplasm. The catalysed reaction is tRNA(Gly) + glycine + ATP = glycyl-tRNA(Gly) + AMP + diphosphate. The protein is Glycine--tRNA ligase beta subunit of Buchnera aphidicola subsp. Acyrthosiphon pisum (strain Tuc7).